Consider the following 124-residue polypeptide: Aspartate 1-decarboxylase (124 aa).

Serine 25 functions as the Schiff-base intermediate with substrate; via pyruvic acid in the catalytic mechanism. Pyruvic acid (Ser) is present on serine 25. Residue threonine 57 participates in substrate binding. The active-site Proton donor is tyrosine 58. Substrate is bound at residue glycine 73–alanine 75.

Belongs to the PanD family. As to quaternary structure, heterooctamer of four alpha and four beta subunits. Requires pyruvate as cofactor. Post-translationally, is synthesized initially as an inactive proenzyme, which is activated by self-cleavage at a specific serine bond to produce a beta-subunit with a hydroxyl group at its C-terminus and an alpha-subunit with a pyruvoyl group at its N-terminus.

The protein localises to the cytoplasm. It carries out the reaction L-aspartate + H(+) = beta-alanine + CO2. It participates in cofactor biosynthesis; (R)-pantothenate biosynthesis; beta-alanine from L-aspartate: step 1/1. In terms of biological role, catalyzes the pyruvoyl-dependent decarboxylation of aspartate to produce beta-alanine. In Clostridium botulinum (strain Alaska E43 / Type E3), this protein is Aspartate 1-decarboxylase.